Here is a 163-residue protein sequence, read N- to C-terminus: MASEHSFDISAALDKQELKNAFEQAKKELDSRYDLKGIKCEIDLSEKENIFKLSSSSEGKLDVLKDIVISKLIKRGINPNAIKELSRESGAMFRLNLKANDAIDSENAKKINKAIKDSKLKVNSSIRGEEIRVVAKQIDDLQAVMKLVKELDLELNVSFKNLK.

It belongs to the YajQ family.

Its function is as follows. Nucleotide-binding protein. The polypeptide is Nucleotide-binding protein CJJ81176_0398 (Campylobacter jejuni subsp. jejuni serotype O:23/36 (strain 81-176)).